We begin with the raw amino-acid sequence, 1069 residues long: Kinesin-like protein vab-8 (1069 aa).

The region spanning 15–325 is the Kinesin motor domain; sequence PLRTIPKLRL…ACKIARTRVK (311 aa). 3 disordered regions span residues 328–374, 391–436, and 572–598; these read MGHG…LESG, SRTT…KSSP, and EQEE…RILS. 2 interaction with unc-51 regions span residues 331-517 and 517-719; these read GRKP…KSKY and YNLD…TVVD. 2 stretches are compositionally biased toward low complexity: residues 339-364 and 391-407; these read SSGT…GTPR and SRTT…TPTS. The segment at 403–877 is interaction with unc-73; sequence STPTSIRPLH…SAERDRKTSK (475 aa). Residues 719–769 adopt a coiled-coil conformation; sequence DWSQIERKKEREKDAMEEEKRKEVLRERRAKLKITELEIKRERNMIDKELD. The interval 786-960 is disordered; it reads SLSPCRGGRT…RQSYSASSGY (175 aa). Residues 824–847 are compositionally biased toward low complexity; it reads GGSLAKLSASGASGSGPPSSPSLG. Basic and acidic residues predominate over residues 883–897; the sequence is SSKERRSSGSKEELQ. The span at 906–928 shows a compositional bias: low complexity; the sequence is TSPKTYGGPGTSSSGRGSSAPGS. Residues 938-960 show a composition bias toward polar residues; that stretch reads TEKTANGTMPRSKRQSYSASSGY. Residues 990 to 1027 are a coiled coil; that stretch reads LVRQADEIRHRQWQLKKELEEAKRAIGQEEDAKMIANS.

The protein belongs to the TRAFAC class myosin-kinesin ATPase superfamily. Kinesin family. KIF26 subfamily. In terms of assembly, interacts with unc-51 and unc-73. In terms of processing, phosphorylated by unc-51.

The protein resides in the cytoplasm. The protein localises to the cytoskeleton. In terms of biological role, required for posterior migration of cells and axon growth cones during nervous system assembly. In PLM neuron, regulates innexin unc-9 gap junction turnover by suppressing unc-9 transport out of the gap junctions. The protein is Kinesin-like protein vab-8 (vab-8) of Caenorhabditis briggsae.